Reading from the N-terminus, the 833-residue chain is Phenylalanine--tRNA ligase beta subunit (833 aa).

The 116-residue stretch at 42 to 157 folds into the tRNA-binding domain; it reads ADLKGPLAVG…PEYEVGTDAI (116 aa). A B5 domain is found at 411-485; it reads SAPHTITIPA…RLEGYENLPS (75 aa). Mg(2+) is bound by residues D463, D469, E472, and E473. In terms of domain architecture, FDX-ACB spans 739 to 832; it reads STFPVATQDV…AAERTGAALR (94 aa).

This sequence belongs to the phenylalanyl-tRNA synthetase beta subunit family. Type 1 subfamily. As to quaternary structure, tetramer of two alpha and two beta subunits. Requires Mg(2+) as cofactor.

It is found in the cytoplasm. It carries out the reaction tRNA(Phe) + L-phenylalanine + ATP = L-phenylalanyl-tRNA(Phe) + AMP + diphosphate + H(+). The chain is Phenylalanine--tRNA ligase beta subunit from Streptomyces avermitilis (strain ATCC 31267 / DSM 46492 / JCM 5070 / NBRC 14893 / NCIMB 12804 / NRRL 8165 / MA-4680).